The sequence spans 402 residues: Speedy protein E2B (402 aa).

The segment at 1–89 (MDRTETRFRK…EEPEKELAPE (89 aa)) is disordered. Positions 16-39 (GKITTSRQPHPQNEQSPQRSTSGY) are enriched in polar residues. A compositionally biased stretch (acidic residues) spans 76–89 (DESEEEPEKELAPE).

This sequence belongs to the Speedy/Ringo family.

The polypeptide is Speedy protein E2B (SPDYE2B) (Homo sapiens (Human)).